A 341-amino-acid chain; its full sequence is MTGSNMSDALANAVCQRCQARFSPAERIVNSNGELYHEHCFVCAQCFRPFPEGLFYEFEGRKYCEHDFQMLFAPCCGSCGEFIIGRVIKAMNNNWHPGCFRCELCDVELADLGFVKNAGRHLCRPCHNREKAKGLGKYICQRCHLVIDEQPLMFRSDAYHPDHFNCTHCGKELTAEARELKGELYCLPCHDKMGVPICGACRRPIEGRVVNALGKQWHVEHFVCAKCEKPFLGHRHYEKKGLAYCETHYNQLFGDVCYNCSHVIEGDVVSALNKAWCVSCFSCSTCNSKLTLKNKFVEFDMKPVCKRCYEKFPLELKKRLKKLSELTSRKAQPKATDLNSA.

5 LIM zinc-binding domains span residues 13–74 (AVCQ…LFAP), 76–133 (CGSC…EKAK), 138–195 (YICQ…KMGV), 196–255 (PICG…LFGD), and 256–315 (VCYN…FPLE). Phe-22 bears the Phosphoserine mark. Thr-327 carries the post-translational modification Phosphothreonine. Ser-328 carries the post-translational modification Phosphoserine.

As to quaternary structure, interacts with TGFB1I1. Interacts with integrin-linked protein kinase 1 (ILK) via the first LIM domain, and in competition with LIMS1. Part of the heterotrimeric IPP complex composed of integrin-linked kinase (ILK), LIMS1 or LIMS2, and PARVA.

The protein localises to the nucleus. Its subcellular location is the cell junction. It is found in the focal adhesion. The protein resides in the cell membrane. Adapter protein in a cytoplasmic complex linking beta-integrins to the actin cytoskeleton, bridges the complex to cell surface receptor tyrosine kinases and growth factor receptors. Plays a role in modulating cell spreading and migration. This chain is LIM and senescent cell antigen-like-containing domain protein 2 (LIMS2), found in Homo sapiens (Human).